The chain runs to 238 residues: Probable 2-phosphosulfolactate phosphatase (238 aa).

This sequence belongs to the ComB family. The cofactor is Mg(2+).

The enzyme catalyses (2R)-O-phospho-3-sulfolactate + H2O = (2R)-3-sulfolactate + phosphate. The protein is Probable 2-phosphosulfolactate phosphatase of Carboxydothermus hydrogenoformans (strain ATCC BAA-161 / DSM 6008 / Z-2901).